A 601-amino-acid chain; its full sequence is Aspartate--tRNA(Asp/Asn) ligase (601 aa).

Glu-187 contacts L-aspartate. The segment at Gln-211 to Lys-214 is aspartate. Arg-233 and His-461 together coordinate L-aspartate. Arg-233–Glu-235 serves as a coordination point for ATP. Glu-495 contributes to the ATP binding site. Arg-502 contacts L-aspartate. Residue Gly-547–Arg-550 participates in ATP binding.

It belongs to the class-II aminoacyl-tRNA synthetase family. Type 1 subfamily. Homodimer.

The protein resides in the cytoplasm. It carries out the reaction tRNA(Asx) + L-aspartate + ATP = L-aspartyl-tRNA(Asx) + AMP + diphosphate. Its function is as follows. Aspartyl-tRNA synthetase with relaxed tRNA specificity since it is able to aspartylate not only its cognate tRNA(Asp) but also tRNA(Asn). Reaction proceeds in two steps: L-aspartate is first activated by ATP to form Asp-AMP and then transferred to the acceptor end of tRNA(Asp/Asn). The chain is Aspartate--tRNA(Asp/Asn) ligase from Pelodictyon phaeoclathratiforme (strain DSM 5477 / BU-1).